Here is a 298-residue protein sequence, read N- to C-terminus: Sulfate adenylyltransferase subunit 2 (298 aa).

Composition is skewed to basic and acidic residues over residues Arg-272 to Asp-282 and Met-289 to Phe-298. The segment at Arg-272–Phe-298 is disordered.

The protein belongs to the PAPS reductase family. CysD subfamily. Heterodimer composed of CysD, the smaller subunit, and CysN.

The catalysed reaction is sulfate + ATP + H(+) = adenosine 5'-phosphosulfate + diphosphate. It participates in sulfur metabolism; hydrogen sulfide biosynthesis; sulfite from sulfate: step 1/3. Functionally, with CysN forms the ATP sulfurylase (ATPS) that catalyzes the adenylation of sulfate producing adenosine 5'-phosphosulfate (APS) and diphosphate, the first enzymatic step in sulfur assimilation pathway. APS synthesis involves the formation of a high-energy phosphoric-sulfuric acid anhydride bond driven by GTP hydrolysis by CysN coupled to ATP hydrolysis by CysD. This Burkholderia lata (strain ATCC 17760 / DSM 23089 / LMG 22485 / NCIMB 9086 / R18194 / 383) protein is Sulfate adenylyltransferase subunit 2.